Reading from the N-terminus, the 511-residue chain is 2,3-bisphosphoglycerate-independent phosphoglycerate mutase (511 aa).

Mn(2+)-binding residues include D12 and S62. S62 (phosphoserine intermediate) is an active-site residue. Substrate is bound by residues H123, 154-155 (RD), R181, R187, 252-255 (RPDR), and K335. The Mn(2+) site is built by D402, H406, D444, H445, and H462.

The protein belongs to the BPG-independent phosphoglycerate mutase family. As to quaternary structure, monomer. Mn(2+) serves as cofactor.

It catalyses the reaction (2R)-2-phosphoglycerate = (2R)-3-phosphoglycerate. Its pathway is carbohydrate degradation; glycolysis; pyruvate from D-glyceraldehyde 3-phosphate: step 3/5. In terms of biological role, catalyzes the interconversion of 2-phosphoglycerate and 3-phosphoglycerate. This chain is 2,3-bisphosphoglycerate-independent phosphoglycerate mutase, found in Acholeplasma laidlawii (strain PG-8A).